We begin with the raw amino-acid sequence, 185 residues long: dCTP deaminase (185 aa).

Residues 107-112, 131-133, glutamine 152, tyrosine 166, and glutamine 176 contribute to the dCTP site; these read KSTYAR and TLE. Residue glutamate 133 is the Proton donor/acceptor of the active site.

Belongs to the dCTP deaminase family. As to quaternary structure, homotrimer.

The catalysed reaction is dCTP + H2O + H(+) = dUTP + NH4(+). The protein operates within pyrimidine metabolism; dUMP biosynthesis; dUMP from dCTP (dUTP route): step 1/2. Catalyzes the deamination of dCTP to dUTP. In Neorickettsia sennetsu (strain ATCC VR-367 / Miyayama) (Ehrlichia sennetsu), this protein is dCTP deaminase.